Here is a 367-residue protein sequence, read N- to C-terminus: Quinolinate synthase (367 aa).

His45 and Ser62 together coordinate iminosuccinate. Cys109 provides a ligand contact to [4Fe-4S] cluster. Residues 140 to 142 and Ser161 each bind iminosuccinate; that span reads YVN. Position 229 (Cys229) interacts with [4Fe-4S] cluster. Residues 255-257 and Thr272 contribute to the iminosuccinate site; that span reads HPE. Cys319 serves as a coordination point for [4Fe-4S] cluster.

The protein belongs to the quinolinate synthase family. Type 3 subfamily. The cofactor is [4Fe-4S] cluster.

The protein resides in the cytoplasm. It carries out the reaction iminosuccinate + dihydroxyacetone phosphate = quinolinate + phosphate + 2 H2O + H(+). Its pathway is cofactor biosynthesis; NAD(+) biosynthesis; quinolinate from iminoaspartate: step 1/1. Catalyzes the condensation of iminoaspartate with dihydroxyacetone phosphate to form quinolinate. This Lysinibacillus sphaericus (strain C3-41) protein is Quinolinate synthase.